A 322-amino-acid polypeptide reads, in one-letter code: Ornithine carbamoyltransferase (322 aa).

Residues 67 to 70, Gln94, Arg118, and 145 to 148 each bind carbamoyl phosphate; these read STRT and HPCQ. Residues Asn176, Asp240, and 244 to 245 each bind L-ornithine; that span reads SM. Carbamoyl phosphate is bound by residues 280 to 281 and Arg308; that span reads CL.

This sequence belongs to the aspartate/ornithine carbamoyltransferase superfamily. OTCase family.

The protein resides in the cytoplasm. It catalyses the reaction carbamoyl phosphate + L-ornithine = L-citrulline + phosphate + H(+). It participates in amino-acid biosynthesis; L-arginine biosynthesis; L-arginine from L-ornithine and carbamoyl phosphate: step 1/3. Its function is as follows. Reversibly catalyzes the transfer of the carbamoyl group from carbamoyl phosphate (CP) to the N(epsilon) atom of ornithine (ORN) to produce L-citrulline. The polypeptide is Ornithine carbamoyltransferase (Oceanobacillus iheyensis (strain DSM 14371 / CIP 107618 / JCM 11309 / KCTC 3954 / HTE831)).